The primary structure comprises 384 residues: ATP synthase subunit a (384 aa).

Residues 22–60 are disordered; that stretch reads PAPAAAPVEQHGAPAPEAAAPDAHAAPAGEHGAAVEAHA. 6 consecutive transmembrane segments (helical) span residues 131–151, 189–209, 218–238, 258–278, 293–313, and 319–339; these read KHVM…LAAV, FVPY…FGLI, NLSV…YAAI, LAPL…TKPF, FVIL…VAFG, and LGIF…FTML. Positions 355–384 are disordered; the sequence is HGHAEEHGHAGPGMGSEHGSHVAGASPGHG.

The protein belongs to the ATPase A chain family. In terms of assembly, F-type ATPases have 2 components, CF(1) - the catalytic core - and CF(0) - the membrane proton channel. CF(1) has five subunits: alpha(3), beta(3), gamma(1), delta(1), epsilon(1). CF(0) has three main subunits: a(1), b(2) and c(9-12). The alpha and beta chains form an alternating ring which encloses part of the gamma chain. CF(1) is attached to CF(0) by a central stalk formed by the gamma and epsilon chains, while a peripheral stalk is formed by the delta and b chains.

It is found in the cell inner membrane. Key component of the proton channel; it plays a direct role in the translocation of protons across the membrane. The sequence is that of ATP synthase subunit a from Anaeromyxobacter dehalogenans (strain 2CP-1 / ATCC BAA-258).